The sequence spans 128 residues: L-ectoine synthase (128 aa).

It belongs to the ectoine synthase family.

It catalyses the reaction (2S)-4-acetamido-2-aminobutanoate = L-ectoine + H2O. The protein operates within amine and polyamine biosynthesis; ectoine biosynthesis; L-ectoine from L-aspartate 4-semialdehyde: step 3/3. Functionally, catalyzes the circularization of gamma-N-acetyl-alpha,gamma-diaminobutyric acid (ADABA) to ectoine (1,4,5,6-tetrahydro-2-methyl-4-pyrimidine carboxylic acid), which is an excellent osmoprotectant. The chain is L-ectoine synthase from Vibrio parahaemolyticus serotype O3:K6 (strain RIMD 2210633).